Reading from the N-terminus, the 3001-residue chain is BEACH domain-containing protein C2 (3001 aa).

Disordered stretches follow at residues 43-80 (DFEQ…SSFG), 103-156 (DVQS…KATV), 1018-1076 (NVLA…NVGS), 1846-1868 (TFSS…PRDK), 2039-2071 (YSGT…SNPP), 2101-2132 (AEEH…RTSN), and 2193-2212 (NLAD…DRSW). Ser48 carries the post-translational modification Phosphoserine. Polar residues-rich tracts occupy residues 57-72 (NESQ…FSNS), 121-132 (SMQQSLSETSLD), and 1037-1050 (SPYN…QLDS). Residues 1854–1863 (LEPPNNNAPP) are compositionally biased toward pro residues. Over residues 2101–2119 (AEEHKRDEGRISGSHEHAS) the composition is skewed to basic and acidic residues. Polar residues predominate over residues 2120–2129 (RTSAGNSDPR). The region spanning 2151–2260 (ELDERILLEL…GRRNAYRAIV (110 aa)) is the BEACH-type PH domain. A compositionally biased stretch (basic and acidic residues) spans 2196–2211 (DHSDESQSGDQEKDRS). The BEACH domain occupies 2275–2564 (QRPEQLLRRT…QLLTVPHMKR (290 aa)). WD repeat units lie at residues 2679–2718 (SGIR…TLET), 2721–2760 (GHCA…TSRT), 2802–2841 (GHRR…LIRR), 2842–2881 (LVGV…IAKA), and 2953–2992 (GQGQ…LKVV).

This is BEACH domain-containing protein C2 from Arabidopsis thaliana (Mouse-ear cress).